The chain runs to 784 residues: Protein-tyrosine-phosphatase MKP1 (784 aa).

Disordered stretches follow at residues 1–73 (MVGR…NSKA) and 94–118 (PKAGSDDVGEWPHPPTPSGNKTGER). Residues 22–34 (WRSASWSASRTAS) are compositionally biased toward low complexity. 2 positions are modified to phosphothreonine: threonine 64 and threonine 109. The region spanning 149 to 291 (ECSKVADHIY…LLQCQKRVHA (143 aa)) is the Tyrosine-protein phosphatase domain. The Phosphocysteine intermediate role is filled by cysteine 235. 235–241 (CCQGVSR) is a binding site for substrate. A disordered region spans residues 488–586 (HSSGSPSSTT…ASPSLAERRG (99 aa)). Low complexity-rich tracts occupy residues 489–510 (SSGSPSSTTSSSSTASPPFLSP) and 521–553 (SLKSFSQSSGRSSLRPSIPPSLTLPKFSSLSLL). Residues 554–577 (PSQTSPKESRGVNTFLQPSPNRKA) are compositionally biased toward polar residues. Phosphoserine is present on residues serine 558 and serine 572.

In terms of assembly, interacts with MPK6. May interact with MPK3 and MPK4. Post-translationally, phosphorylated on threonine and serine residues by MPK6.

The protein localises to the cytoplasm. The protein resides in the cytosol. The catalysed reaction is O-phospho-L-tyrosyl-[protein] + H2O = L-tyrosyl-[protein] + phosphate. In terms of biological role, protein-tyrosine-phosphatase that acts as a negative regulator of MPK6 and MPK3 signaling by dephosphorylating and repressing MPK6 and MPK3. Modulates defense response by repressing salicylic acid (SA) production, camalexin biosynthesis and SNC1-mediated responses. Acts as a negative regulator of MPK6-mediated pathogen-associated molecular pattern (PAMP) responses, including MPK6 and MPK3 activation, accumulation of extracellular reactive oxygen species and inhibition of seedling growth. Involved in UV-B stress tolerance. May be involved in salt and genotoxic stress responses. The chain is Protein-tyrosine-phosphatase MKP1 (MKP1) from Arabidopsis thaliana (Mouse-ear cress).